Consider the following 1064-residue polypeptide: MSFNVPKEEEKIVEFWREIDAFHTQLKLSQGRPTYTFFDGPPFATGRPHHGHLLASTIKDSVTRYACLKGYHVERRFGWDTHGLPVEHEIDKKLGITGSDDVMAMGIDKYNAECRKIVMTYASEWRATVERLGRWIDFDNDYKTLYPSFMESVWWVFKELHTKGKVYRGYRVMPYSTACTTPLSNFEAQQNYKEVPDPAIVVAFQSISDPEVSFLAWTTTPWTLPSNLALAVHPDLQYIKILDKDSNKKYILMESCLGILYKNPKKANFEILERFQGKALDGQKYEPLFPYFKSTFGERAFKLYSADYVEEGSGTGIVHQAPAFGEADYDAAWAAGIIDADHQPPCPVDEQGLLTSEITDFAGQYVKDADKEIIRSLKASGHLVKHSQIFHSYPFCWRSDTPLIYRAVPSWFVRVKEITNEMVENVMSTHWVPQNIRDKRFANWLKNARDWNISRNRYWGTPIPLWVSDDYEEVVCIGSIKELEELSGVSNITDIHRDSIDHITIPSKKGKGTLHRVSEVFDCWFESGSMPYASRHYPFERIEEFKHGFPADFISEGVDQTRGWFYTLTVLGTLLFDKAPYKNVIVSGLVMAEDGKKMSKRLKNYPEPNLIIEKYGSDALRLYLINSPVVRAEILKFKEDGVREVVTRVLIPWWNSYKFFEAQAALYKKVTGKDFVFDDAATLSSNVMDRWILARCQSLIGFVDEEMKQYRLYTVVPQLLGLIEEMTNWYIRFNRRRLKGEDGEIETINALNVLFEVLFTLVRIMGPFTPFITENIYQHLRNYMPIDKNEISLRSVHFLPFPTYKSELDDETVLRRVKRMQTIIELARYVREQNNISLKTPLKTLIVILTNEEYLEDAKLLERYIAEELNVREVVFTSNEEKYGVVYSVQADWPVLGKKLRKDMARVKKALPNVTSEEVKEFQKNKKMVLDGIELVEGDLQIIRSVEVKNEFLKSNTDGICIVLLDIEIDAQLQAEGLAREVINRVQRLRKKSNLQVTDDVRMTYKIKNDTIGLESAVDSNEALFSKVLRRPIEKETGADESNIIASEEQDVQGATFLLSLLRL.

The short motif at 42-52 (PFATGRPHHGH) is the 'HIGH' region element. The short motif at 597 to 601 (KMSKR) is the 'KMSKS' region element. ATP is bound at residue Lys600.

It belongs to the class-I aminoacyl-tRNA synthetase family.

Its subcellular location is the cytoplasm. It catalyses the reaction tRNA(Ile) + L-isoleucine + ATP = L-isoleucyl-tRNA(Ile) + AMP + diphosphate. This Schizosaccharomyces pombe (strain 972 / ATCC 24843) (Fission yeast) protein is Isoleucine--tRNA ligase, cytoplasmic (irs1).